Reading from the N-terminus, the 515-residue chain is Maturase K (515 aa).

Belongs to the intron maturase 2 family. MatK subfamily.

The protein localises to the plastid. It localises to the chloroplast. In terms of biological role, usually encoded in the trnK tRNA gene intron. Probably assists in splicing its own and other chloroplast group II introns. The protein is Maturase K of Alpinia zerumbet (Shell ginger).